A 215-amino-acid chain; its full sequence is E3 ubiquitin-protein ligase znrf1 (215 aa).

Disordered stretches follow at residues 1–39 (MGGK…PGGT) and 66–96 (YTPR…ETGG). The N-myristoyl glycine moiety is linked to residue glycine 2. Residues 172 to 213 (CVICLEELQQGDTIARLPCLCIYHKSCIDSWFEINRSCPEHP) form an RING-type; atypical zinc finger.

Its subcellular location is the endosome. It localises to the lysosome. The protein resides in the membrane. It catalyses the reaction S-ubiquitinyl-[E2 ubiquitin-conjugating enzyme]-L-cysteine + [acceptor protein]-L-lysine = [E2 ubiquitin-conjugating enzyme]-L-cysteine + N(6)-ubiquitinyl-[acceptor protein]-L-lysine.. It functions in the pathway protein modification; protein ubiquitination. E3 ubiquitin-protein ligase that plays a role in neuron cells differentiation. Plays a role in the establishment and maintenance of neuronal transmission and plasticity. This is E3 ubiquitin-protein ligase znrf1 (znrf1) from Danio rerio (Zebrafish).